A 224-amino-acid polypeptide reads, in one-letter code: MTSPANRLQRRLGYQFNSSELMTLSLTHRSANGKHNERLEFLGDSILSFVIADDLYHRFPHVDEGDMSRMRATLVRGKTLAELGREFELGDYLLLGPGELKSGGFRRDSILADCVEAIIGAIYLDSDTEQVRKVILSWYQSRLETIQPGINQKDPKTRLQECLQGRRLALPAYTVTKVHGEAHNQEFTVQCEVTGLDKPVIGKGSSRRKAEQAAAELALKQLES.

The region spanning 5-127 (ANRLQRRLGY…IIGAIYLDSD (123 aa)) is the RNase III domain. A Mg(2+)-binding site is contributed by glutamate 40. The active site involves aspartate 44. Positions 113 and 116 each coordinate Mg(2+). Glutamate 116 is a catalytic residue. The 71-residue stretch at 154-224 (DPKTRLQECL…AELALKQLES (71 aa)) folds into the DRBM domain.

This sequence belongs to the ribonuclease III family. As to quaternary structure, homodimer. Requires Mg(2+) as cofactor.

Its subcellular location is the cytoplasm. It carries out the reaction Endonucleolytic cleavage to 5'-phosphomonoester.. Functionally, digests double-stranded RNA. Involved in the processing of primary rRNA transcript to yield the immediate precursors to the large and small rRNAs (23S and 16S). Processes some mRNAs, and tRNAs when they are encoded in the rRNA operon. Processes pre-crRNA and tracrRNA of type II CRISPR loci if present in the organism. This chain is Ribonuclease 3, found in Photobacterium profundum (strain SS9).